Reading from the N-terminus, the 376-residue chain is MRDPAPSNSEMKRVIVGMSGGVDSSVSAVLLMEQGYQVEGLFMKNWEEDDGTEYCTAREDLADAQAVCDKIGIKLHTANFAAEYWDNVFEHFLEEYKAGRTPNPDILCNREIKFKAFLDYALMLGADLIATGHYVRRRDIDGRTELLKGLDPNKDQSYFLHAVGGEQIARTLFPVGELEKPEVRAIAEKHGLATAKKKDSTGICFIGERRFTDFLRQYLPAQPGEIKTTEGEVIGRHSGLMYHTIGQRQGLGIGGLKDASDDPWYVLVKDLDNNELIVGQGNDHPWLFSRALVSSEIYWVNPIDLSSPRKLTAKVRYRQGDQPCTLEKTADGYRATFDDPQRAVTPGQSVVFYDGEICLGGGVIEIAEPWTSKDKR.

ATP is bound by residues Gly17 to Ser24 and Met43. The segment at Asn103 to Asp105 is interaction with target base in tRNA. The active-site Nucleophile is the Cys108. Cysteines 108 and 204 form a disulfide. Gly132 is an ATP binding site. The interaction with tRNA stretch occupies residues Lys154–Gln156. Cys204 (cysteine persulfide intermediate) is an active-site residue. Residues Arg316 to Tyr317 are interaction with tRNA.

It belongs to the MnmA/TRMU family.

Its subcellular location is the cytoplasm. It catalyses the reaction S-sulfanyl-L-cysteinyl-[protein] + uridine(34) in tRNA + AH2 + ATP = 2-thiouridine(34) in tRNA + L-cysteinyl-[protein] + A + AMP + diphosphate + H(+). Its function is as follows. Catalyzes the 2-thiolation of uridine at the wobble position (U34) of tRNA, leading to the formation of s(2)U34. This Pseudomonas savastanoi pv. phaseolicola (strain 1448A / Race 6) (Pseudomonas syringae pv. phaseolicola (strain 1448A / Race 6)) protein is tRNA-specific 2-thiouridylase MnmA.